Consider the following 186-residue polypeptide: Ribosome-recycling factor (186 aa).

Belongs to the RRF family.

It is found in the cytoplasm. In terms of biological role, responsible for the release of ribosomes from messenger RNA at the termination of protein biosynthesis. May increase the efficiency of translation by recycling ribosomes from one round of translation to another. This Nitratiruptor sp. (strain SB155-2) protein is Ribosome-recycling factor.